We begin with the raw amino-acid sequence, 1129 residues long: DNA-directed RNA polymerase I subunit RPA2 (1129 aa).

The C4-type zinc-finger motif lies at 1061-1093 (CHKCGSILAPLQRIVKRNETGGLSSQPDTCRLC).

Belongs to the RNA polymerase beta chain family. In terms of assembly, component of the RNA polymerase I (Pol I) complex consisting of at least 13 subunits.

The protein localises to the nucleus. It localises to the nucleolus. The catalysed reaction is RNA(n) + a ribonucleoside 5'-triphosphate = RNA(n+1) + diphosphate. DNA-dependent RNA polymerase catalyzes the transcription of DNA into RNA using the four ribonucleoside triphosphates as substrates. Second largest core component of RNA polymerase I which synthesizes ribosomal RNA precursors. Proposed to contribute to the polymerase catalytic activity and forms the polymerase active center together with the largest subunit. Pol I is composed of mobile elements and RPA2 is part of the core element with the central large cleft and probably a clamp element that moves to open and close the cleft. This chain is DNA-directed RNA polymerase I subunit RPA2, found in Drosophila melanogaster (Fruit fly).